Consider the following 525-residue polypeptide: Calcium uptake protein 1 homolog, mitochondrial (525 aa).

Positions 109-146 (ADAGQRPSSAADVNGEDKSSESESEDSEDEEAGSDLHL) are disordered. Positions 130 to 141 (SESEDSEDEEAG) are enriched in acidic residues. EF-hand domains follow at residues 268 to 303 (ISRR…VRQQ) and 459 to 494 (LSDH…RVQR). Residues D281, N283, D285, D287, E292, D472, N474, D476, Q478, and E483 each contribute to the Ca(2+) site.

The protein belongs to the MICU1 family. MICU1 subfamily.

The protein localises to the mitochondrion intermembrane space. It localises to the mitochondrion inner membrane. In terms of biological role, calcium sensor of the mitochondrial calcium uniporter (MCU) channel, which senses calcium level via its EF-hand domains. At low calcium levels, MICU1 occludes the pore of the MCU channel, preventing mitochondrial calcium uptake. At higher calcium levels, calcium-binding to MICU1 induces a conformational change that weakens MCU-MICU1 interactions and moves MICU1 away from the pore, allowing calcium permeation through the MCU channel. Also required to protect against manganese toxicity by preventing manganese uptake by MCU. During development, required in alpha/beta or gamma mushroom body neurons to support olfactory intermediate-term memory in the adult. The chain is Calcium uptake protein 1 homolog, mitochondrial from Drosophila melanogaster (Fruit fly).